Reading from the N-terminus, the 646-residue chain is Tyrosine-protein kinase MasK (646 aa).

At 1–415 (MSPPQTTLPV…PTAGGRRWRT (415 aa)) the chain is on the periplasmic side. A Protein kinase domain is found at 25–300 (YVLVRKLAEG…AFADALETFL (276 aa)). ATP contacts are provided by residues 31–39 (LAEGGMAEI) and Lys-57. Residue Asp-163 is the Proton acceptor of the active site. Residues 373 to 410 (TSAQRPGMSMRPSSPGVPAHGAASRGSTSPESAPTAGG) form a disordered region. Residues 416-433 (LAVGLAGGLMLAAAGIVG) form a helical membrane-spanning segment. The Cytoplasmic segment spans residues 434–646 (YRQWMTTPAS…VMPFSWRVTQ (213 aa)). The tract at residues 521-547 (AGAASDVEAEADEEGADAAPVRSKKAS) is disordered. The span at 527–536 (VEAEADEEGA) shows a compositional bias: acidic residues.

The protein belongs to the protein kinase superfamily. Tyr protein kinase family. In terms of assembly, interacts with MglA. Autophosphorylated.

It is found in the cell inner membrane. The catalysed reaction is L-tyrosyl-[protein] + ATP = O-phospho-L-tyrosyl-[protein] + ADP + H(+). Essential for growth. Interacts with MglA to control social gliding motility. The polypeptide is Tyrosine-protein kinase MasK (masK) (Myxococcus xanthus (strain DK1622)).